Consider the following 464-residue polypeptide: Soluble pyridine nucleotide transhydrogenase (464 aa).

FAD is bound at residue 35 to 44 (EASSQVGGSC).

It belongs to the class-I pyridine nucleotide-disulfide oxidoreductase family. It depends on FAD as a cofactor.

The protein resides in the cytoplasm. It carries out the reaction NAD(+) + NADPH = NADH + NADP(+). Its function is as follows. Conversion of NADPH, generated by peripheral catabolic pathways, to NADH, which can enter the respiratory chain for energy generation. This is Soluble pyridine nucleotide transhydrogenase from Marinomonas sp. (strain MWYL1).